Consider the following 279-residue polypeptide: Probable endonuclease 4 (279 aa).

Zn(2+)-binding residues include histidine 68, histidine 108, glutamate 143, aspartate 177, histidine 180, histidine 214, aspartate 227, histidine 229, and glutamate 259.

Belongs to the AP endonuclease 2 family. Requires Zn(2+) as cofactor.

It carries out the reaction Endonucleolytic cleavage to 5'-phosphooligonucleotide end-products.. Its function is as follows. Endonuclease IV plays a role in DNA repair. It cleaves phosphodiester bonds at apurinic or apyrimidinic (AP) sites, generating a 3'-hydroxyl group and a 5'-terminal sugar phosphate. The sequence is that of Probable endonuclease 4 from Nitrosopumilus maritimus (strain SCM1).